A 310-amino-acid chain; its full sequence is 4-hydroxyproline 2-epimerase (310 aa).

Cys-88 (proton acceptor) is an active-site residue. Substrate is bound by residues 89 to 90 (GH), His-208, and Asp-232. Cys-236 serves as the catalytic Proton donor. 237 to 238 (GT) provides a ligand contact to substrate.

Belongs to the proline racemase family.

It catalyses the reaction trans-4-hydroxy-L-proline = cis-4-hydroxy-D-proline. Catalyzes the epimerization of trans-4-hydroxy-L-proline (t4LHyp) to cis-4-hydroxy-D-proline (c4DHyp). Is likely involved in a degradation pathway that converts t4LHyp to alpha-ketoglutarate. Displays no proline racemase activity. The protein is 4-hydroxyproline 2-epimerase of Acinetobacter baumannii (strain AYE).